Here is a 274-residue protein sequence, read N- to C-terminus: 16S rRNA (guanine(1405)-N(7))-methyltransferase (274 aa).

S-adenosyl-L-methionine contacts are provided by residues 102 to 108, A133, D156, 182 to 183, L198, and Q207; these read HISTRER and DL.

It belongs to the methyltransferase superfamily. Aminoglycoside resistance family.

The catalysed reaction is guanosine(1405) in 16S rRNA + S-adenosyl-L-methionine = N(7)-methylguanosine(1405) in 16S rRNA + S-adenosyl-L-homocysteine. Specifically methylates the N(7) position of guanine 1405 in 16S rRNA. Confers resistance to various aminoglycosides, including gentamicin, kanamycin and sisomicin. The sequence is that of 16S rRNA (guanine(1405)-N(7))-methyltransferase (sgm) from Micromonospora zionensis.